A 233-amino-acid chain; its full sequence is 28 kDa ribonucleoprotein, chloroplastic (233 aa).

Polar residues predominate over residues 1–16; it reads CVAQTSEWEQEGSTNA. Residues 1-52 form a disordered region; the sequence is CVAQTSEWEQEGSTNAVLEGESDPEGAVSWGSETQVSDEGGVEGGQGFSEPP. RRM domains are found at residues 55-133 and 149-227; these read AKLF…KAAP and CRVY…VAEE.

It localises to the plastid. The protein resides in the chloroplast. Its function is as follows. Probably involved in the 3'-end processing of chloroplast mRNA's. This chain is 28 kDa ribonucleoprotein, chloroplastic, found in Spinacia oleracea (Spinach).